The primary structure comprises 228 residues: MRPIPAGGKFRCEATLERELRARGFRAVAGVDEVGRGALFGAVFAGAVILSEERPIRGLNDSKQLDPERREVLAGRIRERAVAWSIAAVDASTIDSINIYQASRMAMRIAVSRLSPAPDFLLVDAVPLEFAVPQRALIKGDERCHAIAAASILAKVARDECMRVWDKVFPEYGLASHKGYSTPEHYRAIEQYGPTPLHRLSFEPVRAHSRFPLDHDRQLDLFDTAGAA.

Residues 26–214 (RAVAGVDEVG…VRAHSRFPLD (189 aa)) form the RNase H type-2 domain. The a divalent metal cation site is built by Asp-32, Glu-33, and Asp-124.

This sequence belongs to the RNase HII family. Requires Mn(2+) as cofactor. The cofactor is Mg(2+).

The protein resides in the cytoplasm. The enzyme catalyses Endonucleolytic cleavage to 5'-phosphomonoester.. Functionally, endonuclease that specifically degrades the RNA of RNA-DNA hybrids. The sequence is that of Ribonuclease HII from Solibacter usitatus (strain Ellin6076).